Reading from the N-terminus, the 799-residue chain is Cadherin-8 (799 aa).

The signal sequence occupies residues 1 to 29; it reads MPERLAETLLDLWTPLIILWITLPSFVYM. The propeptide occupies 30-61; the sequence is APMNQAHVLTTGSPLELSRQSEEMRILNRSKR. Cadherin domains lie at 62–167, 168–276, 277–391, 392–494, and 495–616; these read GWVW…APEF, LNGP…PPKF, AQSL…PPVF, SSPT…DNAP, and EFAS…YVLP. At 62–621 the chain is on the extracellular side; it reads GWVWNQMFVL…PYVLPIGLSM (560 aa). An N-linked (GlcNAc...) asparagine glycan is attached at asparagine 188. N-linked (GlcNAc...) asparagine glycans are attached at residues asparagine 463, asparagine 473, and asparagine 544. The chain crosses the membrane as a helical span at residues 622–642; that stretch reads GALIAILACIILLLVIVVLFV. Residues 643-799 lie on the Cytoplasmic side of the membrane; the sequence is TLRRHKNEPL…YSVGESDKET (157 aa). Serine 795 carries the phosphoserine modification.

The protein resides in the cell membrane. In terms of biological role, cadherins are calcium-dependent cell adhesion proteins. They preferentially interact with themselves in a homophilic manner in connecting cells; cadherins may thus contribute to the sorting of heterogeneous cell types. This chain is Cadherin-8 (Cdh8), found in Rattus norvegicus (Rat).